A 472-amino-acid polypeptide reads, in one-letter code: 3-isopropylmalate dehydratase large subunit (472 aa).

[4Fe-4S] cluster is bound by residues C346, C406, and C409.

This sequence belongs to the aconitase/IPM isomerase family. LeuC type 1 subfamily. In terms of assembly, heterodimer of LeuC and LeuD. [4Fe-4S] cluster serves as cofactor.

The enzyme catalyses (2R,3S)-3-isopropylmalate = (2S)-2-isopropylmalate. It functions in the pathway amino-acid biosynthesis; L-leucine biosynthesis; L-leucine from 3-methyl-2-oxobutanoate: step 2/4. Functionally, catalyzes the isomerization between 2-isopropylmalate and 3-isopropylmalate, via the formation of 2-isopropylmaleate. The protein is 3-isopropylmalate dehydratase large subunit of Thermus thermophilus (strain ATCC BAA-163 / DSM 7039 / HB27).